A 391-amino-acid chain; its full sequence is Transforming growth factor beta-1 proprotein (391 aa).

The N-terminal stretch at 1 to 18 is a signal peptide; the sequence is MDPSPLLALLLLLGAARA. The straightjacket domain stretch occupies residues 19–63; the sequence is LSTCQRLDLEAAKKKRIEAVRGQILSKLRLTAPPPASETPPRPLP. Positions 64-270 are arm domain; it reads DDVRALYNST…ALPAERANEL (207 aa). 3 N-linked (GlcNAc...) asparagine glycosylation sites follow: asparagine 71, asparagine 126, and asparagine 171. The tract at residues 221-249 is bowtie tail; it reads EMGPGHADEMRISIEGFEQQRGDMQSIAK. The Cell attachment site motif lies at 241–243; it reads RGD. Cystine bridges form between cysteine 284/cysteine 295, cysteine 294/cysteine 357, cysteine 323/cysteine 388, and cysteine 327/cysteine 390.

Belongs to the TGF-beta family. In terms of assembly, latency-associated peptide: Homodimer; disulfide-linked. Latency-associated peptide: Interacts with Transforming growth factor beta-1 (TGF-beta-1) chain; interaction is non-covalent and maintains (TGF-beta-1) in a latent state; each Latency-associated peptide (LAP) monomer interacts with TGF-beta-1 in the other monomer. Transforming growth factor beta-1: Homodimer; disulfide-linked. Transforming growth factor beta-1: Interacts with TGF-beta receptors (TGFBR1 and TGFBR2), leading to signal transduction. Transforming growth factor beta-1 proprotein: The precursor proprotein is cleaved in the Golgi apparatus to form Transforming growth factor beta-1 (TGF-beta-1) and Latency-associated peptide (LAP) chains, which remain non-covalently linked, rendering TGF-beta-1 inactive.

Its subcellular location is the secreted. It localises to the extracellular space. The protein resides in the extracellular matrix. Functionally, transforming growth factor beta-1 proprotein: Precursor of the Latency-associated peptide (LAP) and Transforming growth factor beta-1 (TGF-beta-1) chains, which constitute the regulatory and active subunit of TGF-beta-1, respectively. Required to maintain the Transforming growth factor beta-1 (TGF-beta-1) chain in a latent state during storage in extracellular matrix. Associates non-covalently with TGF-beta-1 and regulates its activation via interaction with 'milieu molecules', such as LTBP1, LRRC32/GARP and LRRC33/NRROS, that control activation of TGF-beta-1. Interaction with integrins (ITGAV:ITGB6 or ITGAV:ITGB8) results in distortion of the Latency-associated peptide chain and subsequent release of the active TGF-beta-1. Its function is as follows. Transforming growth factor beta-1: Multifunctional protein that regulates the growth and differentiation of various cell types and is involved in various processes, such as normal development, immune function, microglia function and responses to neurodegeneration. Activation into mature form follows different steps: following cleavage of the proprotein in the Golgi apparatus, Latency-associated peptide (LAP) and Transforming growth factor beta-1 (TGF-beta-1) chains remain non-covalently linked rendering TGF-beta-1 inactive during storage in extracellular matrix. At the same time, LAP chain interacts with 'milieu molecules', such as LTBP1, LRRC32/GARP and LRRC33/NRROS that control activation of TGF-beta-1 and maintain it in a latent state during storage in extracellular milieus. TGF-beta-1 is released from LAP by integrins (ITGAV:ITGB6 or ITGAV:ITGB8): integrin-binding to LAP stabilizes an alternative conformation of the LAP bowtie tail and results in distortion of the LAP chain and subsequent release of the active TGF-beta-1. Once activated following release of LAP, TGF-beta-1 acts by binding to TGF-beta receptors (TGFBR1 and TGFBR2), which transduce signal. While expressed by many cells types, TGF-beta-1 only has a very localized range of action within cell environment thanks to fine regulation of its activation by Latency-associated peptide chain (LAP) and 'milieu molecules'. Plays an important role in bone remodeling: acts as a potent stimulator of osteoblastic bone formation. Can promote either T-helper 17 cells (Th17) or regulatory T-cells (Treg) lineage differentiation in a concentration-dependent manner. Can induce epithelial-to-mesenchymal transition (EMT) and cell migration in various cell types. The chain is Transforming growth factor beta-1 proprotein (TGFB1) from Gallus gallus (Chicken).